The following is a 386-amino-acid chain: S-adenosylmethionine:tRNA ribosyltransferase-isomerase (386 aa).

Belongs to the QueA family. Monomer.

The protein resides in the cytoplasm. It carries out the reaction 7-aminomethyl-7-carbaguanosine(34) in tRNA + S-adenosyl-L-methionine = epoxyqueuosine(34) in tRNA + adenine + L-methionine + 2 H(+). Its pathway is tRNA modification; tRNA-queuosine biosynthesis. Functionally, transfers and isomerizes the ribose moiety from AdoMet to the 7-aminomethyl group of 7-deazaguanine (preQ1-tRNA) to give epoxyqueuosine (oQ-tRNA). In Rickettsia canadensis (strain McKiel), this protein is S-adenosylmethionine:tRNA ribosyltransferase-isomerase.